Here is a 75-residue protein sequence, read N- to C-terminus: Small ribosomal subunit protein bS16 (75 aa).

It belongs to the bacterial ribosomal protein bS16 family.

The protein is Small ribosomal subunit protein bS16 of Campylobacter hominis (strain ATCC BAA-381 / DSM 21671 / CCUG 45161 / LMG 19568 / NCTC 13146 / CH001A).